A 238-amino-acid polypeptide reads, in one-letter code: Pyridoxine 5'-phosphate synthase (238 aa).

A 3-amino-2-oxopropyl phosphate-binding site is contributed by asparagine 7. 9-10 (DH) provides a ligand contact to 1-deoxy-D-xylulose 5-phosphate. Arginine 18 is a 3-amino-2-oxopropyl phosphate binding site. Histidine 43 (proton acceptor) is an active-site residue. Residues arginine 45 and histidine 50 each contribute to the 1-deoxy-D-xylulose 5-phosphate site. The active-site Proton acceptor is glutamate 70. Residue threonine 100 participates in 1-deoxy-D-xylulose 5-phosphate binding. Histidine 190 acts as the Proton donor in catalysis. 3-amino-2-oxopropyl phosphate-binding positions include glycine 191 and 212–213 (GH).

The protein belongs to the PNP synthase family. Homooctamer; tetramer of dimers.

The protein resides in the cytoplasm. The catalysed reaction is 3-amino-2-oxopropyl phosphate + 1-deoxy-D-xylulose 5-phosphate = pyridoxine 5'-phosphate + phosphate + 2 H2O + H(+). The protein operates within cofactor biosynthesis; pyridoxine 5'-phosphate biosynthesis; pyridoxine 5'-phosphate from D-erythrose 4-phosphate: step 5/5. In terms of biological role, catalyzes the complicated ring closure reaction between the two acyclic compounds 1-deoxy-D-xylulose-5-phosphate (DXP) and 3-amino-2-oxopropyl phosphate (1-amino-acetone-3-phosphate or AAP) to form pyridoxine 5'-phosphate (PNP) and inorganic phosphate. The chain is Pyridoxine 5'-phosphate synthase from Prochlorococcus marinus (strain MIT 9215).